The primary structure comprises 135 residues: C-type Lectin CRL (135 aa).

Cystine bridges form between Cys3-Cys14, Cys31-Cys131, Cys38-Cys133, and Cys106-Cys123. The 123-residue stretch at 10 to 132 folds into the C-type lectin domain; that stretch reads MNGLCYKIFN…CESKDAFLCQ (123 aa). Positions 96, 98, 104, 119, and 120 each coordinate Ca(2+). The short motif at 96 to 98 is the Galactose-binding element; sequence QPD.

This sequence belongs to the true venom lectin family. As to quaternary structure, homodimer; disulfide-linked. Expressed by the venom gland.

It is found in the secreted. In terms of biological role, beta-galactoside and N-acetylgalactosamine (GalNAc) specific C-type lectin. The polypeptide is C-type Lectin CRL (Crotalus ruber ruber (Red diamond rattlesnake)).